The following is a 353-amino-acid chain: Vomeronasal type-1 receptor 1 (353 aa).

At 1 to 56 (MVGDTLKLLSPLMTRYFFLLFYSTDSSDLNENQHPLDFDEMAFGKVKSGISFLIQT) the chain is on the extracellular side. The chain crosses the membrane as a helical span at residues 57-77 (GVGILGNSFLLCFYNLILFTG). At 78–84 (HKLRPTD) the chain is on the cytoplasmic side. A helical transmembrane segment spans residues 85 to 105 (LILSHLALANSMVLFFKGIPQ). Residues 106–132 (TMAAFGLKYLLNDTGCKFVFYYHRVGT) lie on the Extracellular side of the membrane. A glycan (N-linked (GlcNAc...) asparagine) is linked at asparagine 117. A helical membrane pass occupies residues 133–153 (RVSLSTICLLNGFQAIKLNPS). Residues 154–169 (ICRWMEIKIRSPRFID) lie on the Cytoplasmic side of the membrane. Residues 170–190 (FCCLLCWVPHVLMNASVLLLV) form a helical membrane-spanning segment. The Extracellular segment spans residues 191–226 (NGPLNSKNSSAKNNYGYCSYKASKRFSSLHAVLYFS). The N-linked (GlcNAc...) asparagine glycan is linked to asparagine 198. Residues 227–247 (PDFMSLGFMVWASGSMVFFLY) form a helical membrane-spanning segment. Residues 248–274 (RHKQQVQHNHSNRLSCRPSQETRATRT) are Cytoplasmic-facing. Residues 275 to 295 (IMVLVSSFFVFYSVHSFLTIW) traverse the membrane as a helical segment. Residues 296 to 303 (TTVVANPG) are Extracellular-facing. A helical transmembrane segment spans residues 304-324 (QWIVNNSVLVASYFPSRSPFV). Over 325–353 (LIMSDTRISQFCFACRTRKTLFPNLVVMP) the chain is Cytoplasmic.

This sequence belongs to the G-protein coupled receptor 1 family.

It localises to the cell membrane. In terms of biological role, putative pheromone receptor. The sequence is that of Vomeronasal type-1 receptor 1 (VN1R1) from Gorilla gorilla gorilla (Western lowland gorilla).